A 719-amino-acid chain; its full sequence is Pesticidal crystal protein Cry1Ib (719 aa).

Belongs to the delta endotoxin family.

Its function is as follows. Promotes colloidosmotic lysis by binding to the midgut epithelial cells of certain coleopteran and lepidopteran species. Active on Plutella xylostella but not on Bombyx mori. This Bacillus thuringiensis subsp. entomocidus protein is Pesticidal crystal protein Cry1Ib (cry1Ib).